The chain runs to 99 residues: Co-chaperonin GroES (99 aa).

It belongs to the GroES chaperonin family. Heptamer of 7 subunits arranged in a ring. Interacts with the chaperonin GroEL.

It localises to the cytoplasm. Functionally, together with the chaperonin GroEL, plays an essential role in assisting protein folding. The GroEL-GroES system forms a nano-cage that allows encapsulation of the non-native substrate proteins and provides a physical environment optimized to promote and accelerate protein folding. GroES binds to the apical surface of the GroEL ring, thereby capping the opening of the GroEL channel. This chain is Co-chaperonin GroES, found in Corynebacterium efficiens (strain DSM 44549 / YS-314 / AJ 12310 / JCM 11189 / NBRC 100395).